The following is a 207-amino-acid chain: Holliday junction branch migration complex subunit RuvA (207 aa).

The segment at 1–64 (MIGRLRGNLL…EDAQLLYGFN (64 aa)) is domain I. Residues 65–143 (TKNERALFRE…GWGAGDLFTP (79 aa)) are domain II. The flexible linker stretch occupies residues 144-158 (ATDAAPMDDGSEFIT). Residues 159–207 (SPQSAVDEAVSALIALGYKPQQASKTVSQVAKPDMTSEVLIRESLKSMI) are domain III.

This sequence belongs to the RuvA family. As to quaternary structure, homotetramer. Forms an RuvA(8)-RuvB(12)-Holliday junction (HJ) complex. HJ DNA is sandwiched between 2 RuvA tetramers; dsDNA enters through RuvA and exits via RuvB. An RuvB hexamer assembles on each DNA strand where it exits the tetramer. Each RuvB hexamer is contacted by two RuvA subunits (via domain III) on 2 adjacent RuvB subunits; this complex drives branch migration. In the full resolvosome a probable DNA-RuvA(4)-RuvB(12)-RuvC(2) complex forms which resolves the HJ.

The protein resides in the cytoplasm. Functionally, the RuvA-RuvB-RuvC complex processes Holliday junction (HJ) DNA during genetic recombination and DNA repair, while the RuvA-RuvB complex plays an important role in the rescue of blocked DNA replication forks via replication fork reversal (RFR). RuvA specifically binds to HJ cruciform DNA, conferring on it an open structure. The RuvB hexamer acts as an ATP-dependent pump, pulling dsDNA into and through the RuvAB complex. HJ branch migration allows RuvC to scan DNA until it finds its consensus sequence, where it cleaves and resolves the cruciform DNA. The sequence is that of Holliday junction branch migration complex subunit RuvA from Aliivibrio fischeri (strain MJ11) (Vibrio fischeri).